Reading from the N-terminus, the 198-residue chain is Holliday junction branch migration complex subunit RuvA (198 aa).

The tract at residues M1–H63 is domain I. The tract at residues T64–K142 is domain II. The interval A143 to K147 is flexible linker. Residues A148–G198 form a domain III region.

Belongs to the RuvA family. As to quaternary structure, homotetramer. Forms an RuvA(8)-RuvB(12)-Holliday junction (HJ) complex. HJ DNA is sandwiched between 2 RuvA tetramers; dsDNA enters through RuvA and exits via RuvB. An RuvB hexamer assembles on each DNA strand where it exits the tetramer. Each RuvB hexamer is contacted by two RuvA subunits (via domain III) on 2 adjacent RuvB subunits; this complex drives branch migration. In the full resolvosome a probable DNA-RuvA(4)-RuvB(12)-RuvC(2) complex forms which resolves the HJ.

It localises to the cytoplasm. The RuvA-RuvB-RuvC complex processes Holliday junction (HJ) DNA during genetic recombination and DNA repair, while the RuvA-RuvB complex plays an important role in the rescue of blocked DNA replication forks via replication fork reversal (RFR). RuvA specifically binds to HJ cruciform DNA, conferring on it an open structure. The RuvB hexamer acts as an ATP-dependent pump, pulling dsDNA into and through the RuvAB complex. HJ branch migration allows RuvC to scan DNA until it finds its consensus sequence, where it cleaves and resolves the cruciform DNA. The sequence is that of Holliday junction branch migration complex subunit RuvA from Streptococcus pyogenes serotype M6 (strain ATCC BAA-946 / MGAS10394).